Here is a 372-residue protein sequence, read N- to C-terminus: Glutamate 5-kinase (372 aa).

Lys-14 is a binding site for ATP. Positions 54, 141, and 153 each coordinate substrate. ATP is bound at residue 173–174 (TD). Residues 280-358 (RGRVIIDAGA…SEIESVLGHL (79 aa)) enclose the PUA domain.

It belongs to the glutamate 5-kinase family.

The protein resides in the cytoplasm. It catalyses the reaction L-glutamate + ATP = L-glutamyl 5-phosphate + ADP. It functions in the pathway amino-acid biosynthesis; L-proline biosynthesis; L-glutamate 5-semialdehyde from L-glutamate: step 1/2. Its function is as follows. Catalyzes the transfer of a phosphate group to glutamate to form L-glutamate 5-phosphate. The protein is Glutamate 5-kinase of Cupriavidus metallidurans (strain ATCC 43123 / DSM 2839 / NBRC 102507 / CH34) (Ralstonia metallidurans).